A 94-amino-acid polypeptide reads, in one-letter code: Co-chaperonin GroES (94 aa).

Belongs to the GroES chaperonin family. As to quaternary structure, heptamer of 7 subunits arranged in a ring. Interacts with the chaperonin GroEL.

The protein resides in the cytoplasm. In terms of biological role, together with the chaperonin GroEL, plays an essential role in assisting protein folding. The GroEL-GroES system forms a nano-cage that allows encapsulation of the non-native substrate proteins and provides a physical environment optimized to promote and accelerate protein folding. GroES binds to the apical surface of the GroEL ring, thereby capping the opening of the GroEL channel. The polypeptide is Co-chaperonin GroES (Streptococcus pneumoniae (strain CGSP14)).